Consider the following 193-residue polypeptide: UPF0215 protein PH0071 (193 aa).

The protein belongs to the UPF0215 family.

This Pyrococcus horikoshii (strain ATCC 700860 / DSM 12428 / JCM 9974 / NBRC 100139 / OT-3) protein is UPF0215 protein PH0071.